We begin with the raw amino-acid sequence, 792 residues long: Genome polyprotein (792 aa).

An interaction with host EXOC1 region spans residues 1-15 (MNNQRKKTGNPSFNM). At 1–101 (MNNQRKKTGN…LNIMNRRRRS (101 aa)) the chain is on the cytoplasmic side. A hydrophobic; homodimerization of capsid protein C region spans residues 37 to 72 (LLSGQGPMKLVMAFVAFLRFLAIPPTAGILKRWGSF). Positions 101–114 (SVTMILMLLPTALA) are cleaved as a propeptide — ER anchor for the capsid protein C, removed in mature form by serine protease NS3. The chain crosses the membrane as a helical span at residues 102 to 119 (VTMILMLLPTALAFHLTT). The Extracellular portion of the chain corresponds to 120 to 242 (RGGEPTLIVS…QIQKVETWAL (123 aa)). Asparagine 183 carries an N-linked (GlcNAc...) asparagine; by host glycan. The helical transmembrane segment at 243–260 (RHPGFTVIGLFLAHAIGT) threads the bilayer. Serine 261 is a topological domain (cytoplasmic). The helical transmembrane segment at 262–280 (ITQKGIIFILLMLVTPSMA) threads the bilayer. Residues 281–725 (MRCVGIGNRD…IHQIFGTAYG (445 aa)) lie on the Extracellular side of the membrane. Cystine bridges form between cysteine 283–cysteine 310, cysteine 340–cysteine 401, cysteine 354–cysteine 385, and cysteine 372–cysteine 396. A glycan (N-linked (GlcNAc...) asparagine; by host) is linked at asparagine 347. The segment at 378-391 (DRGWGNGCGLFGKG) is fusion peptide. N-linked (GlcNAc...) asparagine; by host glycosylation occurs at asparagine 433. Disulfide bonds link cysteine 465/cysteine 565 and cysteine 582/cysteine 613. A helical membrane pass occupies residues 726-746 (VLFSGVSWTMKIGIGILLTWL). Residues 747 to 752 (GLNSRS) lie on the Cytoplasmic side of the membrane. A helical transmembrane segment spans residues 753–775 (TSLSMTCIAVGMVTLYLGVMVQA). The Extracellular portion of the chain corresponds to 776 to 792 (DSGCVINWKGKELKCGS). A disulfide bridge connects residues cysteine 779 and cysteine 790.

As to quaternary structure, homodimer. Interacts (via N-terminus) with host EXOC1 (via C-terminus); this interaction results in EXOC1 degradation through the proteasome degradation pathway. Forms heterodimers with envelope protein E in the endoplasmic reticulum and Golgi. In terms of assembly, homodimer; in the endoplasmic reticulum and Golgi. Interacts with protein prM. Interacts with non-structural protein 1. As to quaternary structure, homodimer; Homohexamer when secreted. Interacts with envelope protein E. Specific enzymatic cleavages in vivo yield mature proteins. Cleavages in the lumen of endoplasmic reticulum are performed by host signal peptidase, wereas cleavages in the cytoplasmic side are performed by serine protease NS3. Signal cleavage at the 2K-4B site requires a prior NS3 protease-mediated cleavage at the 4A-2K site. In terms of processing, N-glycosylated. Post-translationally, N-glycosylated. The excreted form is glycosylated and this is required for efficient secretion of the protein from infected cells.

It is found in the virion. Its subcellular location is the host nucleus. It localises to the host cytoplasm. The protein localises to the host perinuclear region. The protein resides in the secreted. It is found in the virion membrane. Its subcellular location is the host endoplasmic reticulum membrane. Functionally, plays a role in virus budding by binding to the cell membrane and gathering the viral RNA into a nucleocapsid that forms the core of a mature virus particle. During virus entry, may induce genome penetration into the host cytoplasm after hemifusion induced by the surface proteins. Can migrate to the cell nucleus where it modulates host functions. Overcomes the anti-viral effects of host EXOC1 by sequestering and degrading the latter through the proteasome degradation pathway. In terms of biological role, inhibits RNA silencing by interfering with host Dicer. Its function is as follows. Prevents premature fusion activity of envelope proteins in trans-Golgi by binding to envelope protein E at pH6.0. After virion release in extracellular space, gets dissociated from E dimers. Acts as a chaperone for envelope protein E during intracellular virion assembly by masking and inactivating envelope protein E fusion peptide. prM is the only viral peptide matured by host furin in the trans-Golgi network probably to avoid catastrophic activation of the viral fusion activity in acidic Golgi compartment prior to virion release. prM-E cleavage is inefficient, and many virions are only partially matured. These uncleaved prM would play a role in immune evasion. Functionally, may play a role in virus budding. Exerts cytotoxic effects by activating a mitochondrial apoptotic pathway through M ectodomain. May display a viroporin activity. In terms of biological role, binds to host cell surface receptor and mediates fusion between viral and cellular membranes. Envelope protein is synthesized in the endoplasmic reticulum in the form of heterodimer with protein prM. They play a role in virion budding in the ER, and the newly formed immature particle is covered with 60 spikes composed of heterodimer between precursor prM and envelope protein E. The virion is transported to the Golgi apparatus where the low pH causes dissociation of PrM-E heterodimers and formation of E homodimers. prM-E cleavage is inefficient, and many virions are only partially matured. These uncleaved prM would play a role in immune evasion. Its function is as follows. Involved in immune evasion, pathogenesis and viral replication. Once cleaved off the polyprotein, is targeted to three destinations: the viral replication cycle, the plasma membrane and the extracellular compartment. Essential for viral replication. Required for formation of the replication complex and recruitment of other non-structural proteins to the ER-derived membrane structures. Excreted as a hexameric lipoparticle that plays a role against host immune response. Antagonizing the complement function. Binds to the host macrophages and dendritic cells. Inhibits signal transduction originating from Toll-like receptor 3 (TLR3). Disrupts the host endothelial glycocalyx layer of host pulmonary microvascular endothelial cells, inducing degradation of sialic acid and shedding of heparan sulfate proteoglycans. NS1 induces expression of sialidases, heparanase, and activates cathepsin L, which activates heparanase via enzymatic cleavage. These effects are probably linked to the endothelial hyperpermeability observed in severe dengue disease. This Aedes aegypti (Yellowfever mosquito) protein is Genome polyprotein.